Consider the following 504-residue polypeptide: ADP,ATP carrier protein 3 (504 aa).

A run of 12 helical transmembrane segments spans residues Leu-23–Leu-43, Ile-59–Tyr-79, Tyr-90–Ile-110, Tyr-146–Trp-166, Pro-183–Phe-203, Glu-230–Phe-250, Ile-296–Ala-316, Val-329–Ile-349, Leu-364–Ile-384, Glu-386–Ile-406, Phe-449–Thr-469, and Ile-473–Val-493.

This sequence belongs to the ADP/ATP translocase tlc family.

The protein localises to the cell membrane. Functionally, provides the rickettsial cell with host ATP in exchange for rickettsial ADP. This is an obligate exchange system. This energy acquiring activity is an important component of rickettsial parasitism. This is ADP,ATP carrier protein 3 (tlcC) from Rickettsia bellii (strain RML369-C).